The sequence spans 331 residues: Phosphoribosylformylglycinamidine cyclo-ligase (331 aa).

Belongs to the AIR synthase family.

Its subcellular location is the cytoplasm. The catalysed reaction is 2-formamido-N(1)-(5-O-phospho-beta-D-ribosyl)acetamidine + ATP = 5-amino-1-(5-phospho-beta-D-ribosyl)imidazole + ADP + phosphate + H(+). The protein operates within purine metabolism; IMP biosynthesis via de novo pathway; 5-amino-1-(5-phospho-D-ribosyl)imidazole from N(2)-formyl-N(1)-(5-phospho-D-ribosyl)glycinamide: step 2/2. The sequence is that of Phosphoribosylformylglycinamidine cyclo-ligase from Clostridium botulinum (strain Loch Maree / Type A3).